The primary structure comprises 192 residues: Crossover junction endodeoxyribonuclease RuvC (192 aa).

Catalysis depends on residues D20, E80, and D153. Residues D20, E80, and D153 each contribute to the Mg(2+) site.

This sequence belongs to the RuvC family. Homodimer which binds Holliday junction (HJ) DNA. The HJ becomes 2-fold symmetrical on binding to RuvC with unstacked arms; it has a different conformation from HJ DNA in complex with RuvA. In the full resolvosome a probable DNA-RuvA(4)-RuvB(12)-RuvC(2) complex forms which resolves the HJ. Mg(2+) serves as cofactor.

The protein resides in the cytoplasm. It catalyses the reaction Endonucleolytic cleavage at a junction such as a reciprocal single-stranded crossover between two homologous DNA duplexes (Holliday junction).. In terms of biological role, the RuvA-RuvB-RuvC complex processes Holliday junction (HJ) DNA during genetic recombination and DNA repair. Endonuclease that resolves HJ intermediates. Cleaves cruciform DNA by making single-stranded nicks across the HJ at symmetrical positions within the homologous arms, yielding a 5'-phosphate and a 3'-hydroxyl group; requires a central core of homology in the junction. The consensus cleavage sequence is 5'-(A/T)TT(C/G)-3'. Cleavage occurs on the 3'-side of the TT dinucleotide at the point of strand exchange. HJ branch migration catalyzed by RuvA-RuvB allows RuvC to scan DNA until it finds its consensus sequence, where it cleaves and resolves the cruciform DNA. This is Crossover junction endodeoxyribonuclease RuvC from Christiangramia forsetii (strain DSM 17595 / CGMCC 1.15422 / KT0803) (Gramella forsetii).